Reading from the N-terminus, the 288-residue chain is Acetyl-coenzyme A carboxylase carboxyl transferase subunit beta (288 aa).

Residues L34–R288 enclose the CoA carboxyltransferase N-terminal domain. Zn(2+) contacts are provided by C38, C41, C56, and C59. A C4-type zinc finger spans residues C38–C59.

Belongs to the AccD/PCCB family. As to quaternary structure, acetyl-CoA carboxylase is a heterohexamer composed of biotin carboxyl carrier protein (AccB), biotin carboxylase (AccC) and two subunits each of ACCase subunit alpha (AccA) and ACCase subunit beta (AccD). Requires Zn(2+) as cofactor.

The protein localises to the cytoplasm. It carries out the reaction N(6)-carboxybiotinyl-L-lysyl-[protein] + acetyl-CoA = N(6)-biotinyl-L-lysyl-[protein] + malonyl-CoA. It functions in the pathway lipid metabolism; malonyl-CoA biosynthesis; malonyl-CoA from acetyl-CoA: step 1/1. Its function is as follows. Component of the acetyl coenzyme A carboxylase (ACC) complex. Biotin carboxylase (BC) catalyzes the carboxylation of biotin on its carrier protein (BCCP) and then the CO(2) group is transferred by the transcarboxylase to acetyl-CoA to form malonyl-CoA. This is Acetyl-coenzyme A carboxylase carboxyl transferase subunit beta from Streptococcus suis (strain 98HAH33).